The primary structure comprises 99 residues: Accessory protein p12I (99 aa).

The SH3-binding signature appears at 4-11 (RLLSPLSP). Residues 12–32 (LALTALLLFLLSPGEVSGLLL) traverse the membrane as a helical segment. Positions 33 to 38 (RPLPAP) match the SH3-binding motif. Residues 48 to 68 (ILSNLLFLLFLPLFFSLPLLL) form a helical membrane-spanning segment. 2 short sequence motifs (SH3-binding) span residues 70–77 (PSLPITMR) and 88–93 (RAPSQP).

The protein belongs to the HTLV-1 accessory protein p12I family. P12I is a homodimer. Interacts with human CANX, CALR, ATP6V0C, IL2RB, IL2RG. Binds to MHC-I heavy chains HLA-A2, HLA-B7 and HLA-Cw4. In terms of processing, ubiquitinated; a fraction of P12I is degraded via the ubiquitin system.

It localises to the host endoplasmic reticulum membrane. Its subcellular location is the host Golgi apparatus. It is found in the host cis-Golgi network membrane. In terms of biological role, p12I is a modulator of T-lymphocyte proliferation and immune function and may contribute to establish a persistent infection. Binds and down-modulates cell surface expression of interleukin-2 receptors IL2RB and IL2RG. Also down-modulates cell surface MHC-I molecules by binding to free immature MHC-I heavy chains in the ER and targeting them to the proteasome for degradation. Binding to IL2RB mediates recruitment of JAK1 and JAK3. As a result of this interaction, p12I increases DNA-binding and transcriptional activity of STAT5. The protein is Accessory protein p12I of Homo sapiens (Human).